The sequence spans 49 residues: DNA-directed RNA polymerase subunit Rpo12 (49 aa).

Zn(2+) contacts are provided by Cys11, Cys27, and Cys30.

It belongs to the archaeal Rpo12/eukaryotic RPC10 RNA polymerase subunit family. Part of the RNA polymerase complex. It depends on Zn(2+) as a cofactor.

It localises to the cytoplasm. The enzyme catalyses RNA(n) + a ribonucleoside 5'-triphosphate = RNA(n+1) + diphosphate. In terms of biological role, DNA-dependent RNA polymerase (RNAP) catalyzes the transcription of DNA into RNA using the four ribonucleoside triphosphates as substrates. The chain is DNA-directed RNA polymerase subunit Rpo12 from Thermococcus onnurineus (strain NA1).